A 47-amino-acid polypeptide reads, in one-letter code: PhoP/PhoQ regulator MgrB (47 aa).

Residues 6-26 (WVVLVVVVLACLLLWAQVFNM) traverse the membrane as a helical segment.

Belongs to the MgrB family. As to quaternary structure, may form homooligomers. Probably interacts with the periplasmic domain of PhoQ.

Its subcellular location is the cell inner membrane. Its function is as follows. PhoP-regulated transcription is redox-sensitive, being activated when the periplasm becomes more reducing. MgrB acts between DsbA/DsbB and PhoP/PhoQ in this pathway. Represses PhoP/PhoQ signaling, possibly by binding to the periplasmic domain of PhoQ, altering its activity and that of downstream effector PhoP. The polypeptide is PhoP/PhoQ regulator MgrB (Escherichia coli O157:H7).